We begin with the raw amino-acid sequence, 156 residues long: MPRKGPAPKRPLVNDPVYGSQLVTQLVNKVLLDGKKSLAERIVYGALEQAREKTGTDPVVTLKRAMDNVKPSLEVRSRRVGGATYQVPVEVRPDRSVTLALRWLVSFSKARREKTMVERLANEILDASNGLGAAVKRREDTHKMAEANRAFAHYRW.

The protein belongs to the universal ribosomal protein uS7 family. In terms of assembly, part of the 30S ribosomal subunit. Contacts proteins S9 and S11.

Its function is as follows. One of the primary rRNA binding proteins, it binds directly to 16S rRNA where it nucleates assembly of the head domain of the 30S subunit. Is located at the subunit interface close to the decoding center, probably blocks exit of the E-site tRNA. The polypeptide is Small ribosomal subunit protein uS7 (Mycolicibacterium vanbaalenii (strain DSM 7251 / JCM 13017 / BCRC 16820 / KCTC 9966 / NRRL B-24157 / PYR-1) (Mycobacterium vanbaalenii)).